The primary structure comprises 196 residues: Heat shock protein beta-8 (196 aa).

Residues 1–35 (MADGQMPFSCHYPSRLRRDPFRDSPLPSRLLDDDF) are disordered. 2 positions are modified to phosphoserine: S24 and S57. A Phosphothreonine modification is found at T63. Asymmetric dimethylarginine occurs at positions 71 and 78. In terms of domain architecture, sHSP spans 74–185 (TAAARFGVPA…PFGESNFNNE (112 aa)). Position 87 is a phosphoserine (S87). The disordered stretch occupies residues 176–196 (PFGESNFNNELPQDSQEVTCT). Residues 178–196 (GESNFNNELPQDSQEVTCT) are compositionally biased toward polar residues.

The protein belongs to the small heat shock protein (HSP20) family. As to quaternary structure, monomer. Forms a ternary complex with BAG3 and HSPA1A. Component of the chaperone-assisted selective autophagy (CASA) complex consisting of BAG3, HSPA8/HSC70, HSPB8 and STUB1/CHIP. Interacts with HSPB1. Interacts with DNAJB6. Interacts with BAG3. Post-translationally, phosphorylated.

It localises to the cytoplasm. Its subcellular location is the nucleus. Its function is as follows. Involved in the chaperone-assisted selective autophagy (CASA), a crucial process for protein quality control, particularly in mechanical strained cells and tissues such as muscle. Displays temperature-dependent chaperone activity. The chain is Heat shock protein beta-8 (HSPB8) from Canis lupus familiaris (Dog).